Reading from the N-terminus, the 120-residue chain is NAD(P)H-quinone oxidoreductase subunit 3, chloroplastic (120 aa).

Transmembrane regions (helical) follow at residues 9–29 (IFWA…LISG), 64–84 (MFAL…PWAM), and 88–108 (VLGL…IVGS).

It belongs to the complex I subunit 3 family. NDH is composed of at least 16 different subunits, 5 of which are encoded in the nucleus.

The protein resides in the plastid. It localises to the chloroplast thylakoid membrane. The enzyme catalyses a plastoquinone + NADH + (n+1) H(+)(in) = a plastoquinol + NAD(+) + n H(+)(out). The catalysed reaction is a plastoquinone + NADPH + (n+1) H(+)(in) = a plastoquinol + NADP(+) + n H(+)(out). NDH shuttles electrons from NAD(P)H:plastoquinone, via FMN and iron-sulfur (Fe-S) centers, to quinones in the photosynthetic chain and possibly in a chloroplast respiratory chain. The immediate electron acceptor for the enzyme in this species is believed to be plastoquinone. Couples the redox reaction to proton translocation, and thus conserves the redox energy in a proton gradient. This is NAD(P)H-quinone oxidoreductase subunit 3, chloroplastic from Manihot esculenta (Cassava).